We begin with the raw amino-acid sequence, 211 residues long: Arginine exporter protein ArgO (211 aa).

6 helical membrane passes run 1–21 (MISY…PLGP), 37–57 (LMIA…GIFG), 68–88 (LLAL…FGAL), 111–131 (IIAT…DTFV), 147–167 (WFAL…ALLA), and 179–199 (AQRI…FQLA).

The protein belongs to the LysE/ArgO transporter (TC 2.A.75) family.

The protein resides in the cell inner membrane. It carries out the reaction L-arginine(in) = L-arginine(out). In terms of biological role, involved in the export of arginine. Important to control the intracellular level of arginine and the correct balance between arginine and lysine. In Salmonella schwarzengrund (strain CVM19633), this protein is Arginine exporter protein ArgO.